We begin with the raw amino-acid sequence, 136 residues long: uncharacterized protein (136 aa).

The interval 1-51 is disordered; that stretch reads MAANATSGRPPSIALRQPEATGWRRGIPAKVATKGTQAEREGDVRSGGRAR. A compositionally biased stretch (basic and acidic residues) spans 37-46; that stretch reads QAEREGDVRS.

This is an uncharacterized protein from Homo sapiens (Human).